The primary structure comprises 168 residues: Transcriptional regulator MraZ (168 aa).

2 SpoVT-AbrB domains span residues 8-51 and 90-140; these read EYNQ…GGDR and ALNM…KADT.

Belongs to the MraZ family. As to quaternary structure, forms oligomers.

The protein localises to the cytoplasm. It is found in the nucleoid. The chain is Transcriptional regulator MraZ from Cereibacter sphaeroides (strain ATCC 17025 / ATH 2.4.3) (Rhodobacter sphaeroides).